Consider the following 313-residue polypeptide: Ribosomal protein L11 methyltransferase (313 aa).

4 residues coordinate S-adenosyl-L-methionine: Thr164, Gly185, Asp207, and Asn249.

The protein belongs to the methyltransferase superfamily. PrmA family.

The protein resides in the cytoplasm. It carries out the reaction L-lysyl-[protein] + 3 S-adenosyl-L-methionine = N(6),N(6),N(6)-trimethyl-L-lysyl-[protein] + 3 S-adenosyl-L-homocysteine + 3 H(+). In terms of biological role, methylates ribosomal protein L11. In Clostridium botulinum (strain Eklund 17B / Type B), this protein is Ribosomal protein L11 methyltransferase.